The primary structure comprises 431 residues: Intraflagellar transport protein 38 (431 aa).

The stretch at 177 to 218 (SAAVQQRIKNLAAECNTLQEEVTTNKREKAKLEEQITQKKQS) forms a coiled coil. The segment at 346–431 (INTNAEIPDD…EELDPDNIEF (86 aa)) is disordered. Residues 352–370 (IPDDESYSYSYEEEEEEEQ) show a composition bias toward acidic residues. Positions 384–405 (PETHSNGEKHRGLDELSHKSNE) are enriched in basic and acidic residues. The segment covering 420–431 (GGEELDPDNIEF) has biased composition (acidic residues).

This sequence belongs to the CLUAP1 family.

It localises to the cell projection. The protein resides in the cilium. The protein localises to the flagellum. It is found in the cytoplasm. Its subcellular location is the cytoskeleton. It localises to the flagellum axoneme. The protein resides in the flagellum basal body. In terms of biological role, component of the intraflagellar transport complex B (IFT-B) involved in flagellar assembly. This chain is Intraflagellar transport protein 38, found in Giardia intestinalis (strain ATCC 50803 / WB clone C6) (Giardia lamblia).